A 513-amino-acid polypeptide reads, in one-letter code: 2,3-bisphosphoglycerate-independent phosphoglycerate mutase (513 aa).

Mn(2+)-binding residues include D12 and S62. The active-site Phosphoserine intermediate is the S62. Residues H123, 153 to 154 (RD), R185, R191, 261 to 264 (RSDR), and K335 each bind substrate. D402, H406, D443, H444, and H462 together coordinate Mn(2+).

The protein belongs to the BPG-independent phosphoglycerate mutase family. Monomer. Mn(2+) serves as cofactor.

It catalyses the reaction (2R)-2-phosphoglycerate = (2R)-3-phosphoglycerate. Its pathway is carbohydrate degradation; glycolysis; pyruvate from D-glyceraldehyde 3-phosphate: step 3/5. In terms of biological role, catalyzes the interconversion of 2-phosphoglycerate and 3-phosphoglycerate. This is 2,3-bisphosphoglycerate-independent phosphoglycerate mutase from Thiobacillus denitrificans (strain ATCC 25259 / T1).